A 217-amino-acid polypeptide reads, in one-letter code: Oxygen regulatory protein NreC (217 aa).

Residues 2-119 enclose the Response regulatory domain; that stretch reads KIVIADDHAV…QLLLAIRTVY (118 aa). Asp-53 is modified (4-aspartylphosphate). Positions 148 to 213 constitute an HTH luxR-type domain; that stretch reads TSDPFKILSK…ELVEYALKKK (66 aa). The H-T-H motif DNA-binding region spans 172 to 191; it reads NKEIAEKLFVSVKTVEAHKT.

Post-translationally, phosphorylated by NreB.

The protein resides in the cytoplasm. In terms of biological role, member of the two-component regulatory system NreB/NreC involved in the control of dissimilatory nitrate/nitrite reduction in response to oxygen. Phosphorylated NreC binds to a GC-rich palindromic sequence at the promoters of the nitrate (narGHJI) and nitrite (nir) reductase operons, as well as the putative nitrate transporter gene narT, and activates their expression. This chain is Oxygen regulatory protein NreC (nreC), found in Staphylococcus aureus (strain bovine RF122 / ET3-1).